The primary structure comprises 261 residues: Cytochrome c oxidase subunit 3 (261 aa).

The Mitochondrial matrix portion of the chain corresponds to 1-15 (MAHQAHAYHMVDPSP). A helical membrane pass occupies residues 16 to 34 (WPLTGAIAALLMTSGLAIW). Over 35-40 (FHFHST) the chain is Mitochondrial intermembrane. A helical membrane pass occupies residues 41-66 (TLMTLGLILLLLTMYQWWRDIIREGT). Residues 67 to 72 (FQGHHT) lie on the Mitochondrial matrix side of the membrane. Residues 73 to 105 (PPVQKGLRYGMILFITSEVFFFLGFFWAFYHSS) form a helical membrane-spanning segment. Topologically, residues 106–128 (LAPTPELGGCWPPTGITPLDPFE) are mitochondrial intermembrane. A helical membrane pass occupies residues 129-152 (VPLLNTAVLLASGVTVTWAHHSIM). At 153–155 (EGE) the chain is on the mitochondrial matrix side. A helical transmembrane segment spans residues 156 to 183 (RKQAIQSLALTILLGLYFTALQAMEYYE). Residues 184-190 (APFTIAD) are Mitochondrial intermembrane-facing. A helical transmembrane segment spans residues 191–223 (GVYGSTFFVATGFHGLHVIIGSTFLAVCLLRQI). The Mitochondrial matrix portion of the chain corresponds to 224–232 (QYHFTSEHH). A helical transmembrane segment spans residues 233–256 (FGFEAAAWYWHFVDVVWLFLYVSI). The Mitochondrial intermembrane segment spans residues 257–261 (YWWGS).

The protein belongs to the cytochrome c oxidase subunit 3 family. Component of the cytochrome c oxidase (complex IV, CIV), a multisubunit enzyme composed of 14 subunits. The complex is composed of a catalytic core of 3 subunits MT-CO1, MT-CO2 and MT-CO3, encoded in the mitochondrial DNA, and 11 supernumerary subunits COX4I, COX5A, COX5B, COX6A, COX6B, COX6C, COX7A, COX7B, COX7C, COX8 and NDUFA4, which are encoded in the nuclear genome. The complex exists as a monomer or a dimer and forms supercomplexes (SCs) in the inner mitochondrial membrane with NADH-ubiquinone oxidoreductase (complex I, CI) and ubiquinol-cytochrome c oxidoreductase (cytochrome b-c1 complex, complex III, CIII), resulting in different assemblies (supercomplex SCI(1)III(2)IV(1) and megacomplex MCI(2)III(2)IV(2)).

It localises to the mitochondrion inner membrane. The enzyme catalyses 4 Fe(II)-[cytochrome c] + O2 + 8 H(+)(in) = 4 Fe(III)-[cytochrome c] + 2 H2O + 4 H(+)(out). Its function is as follows. Component of the cytochrome c oxidase, the last enzyme in the mitochondrial electron transport chain which drives oxidative phosphorylation. The respiratory chain contains 3 multisubunit complexes succinate dehydrogenase (complex II, CII), ubiquinol-cytochrome c oxidoreductase (cytochrome b-c1 complex, complex III, CIII) and cytochrome c oxidase (complex IV, CIV), that cooperate to transfer electrons derived from NADH and succinate to molecular oxygen, creating an electrochemical gradient over the inner membrane that drives transmembrane transport and the ATP synthase. Cytochrome c oxidase is the component of the respiratory chain that catalyzes the reduction of oxygen to water. Electrons originating from reduced cytochrome c in the intermembrane space (IMS) are transferred via the dinuclear copper A center (CU(A)) of subunit 2 and heme A of subunit 1 to the active site in subunit 1, a binuclear center (BNC) formed by heme A3 and copper B (CU(B)). The BNC reduces molecular oxygen to 2 water molecules using 4 electrons from cytochrome c in the IMS and 4 protons from the mitochondrial matrix. The chain is Cytochrome c oxidase subunit 3 (mt-co3) from Cyprinus carpio (Common carp).